A 353-amino-acid polypeptide reads, in one-letter code: GTPase Obg (353 aa).

The region spanning 1–159 (MKFLDEAKVY…RWIWLRLKLI (159 aa)) is the Obg domain. Positions 160 to 327 (ADAGLVGLPN…ALRALAAVIG (168 aa)) constitute an OBG-type G domain. GTP-binding positions include 166–173 (GLPNAGKS), 191–195 (FTTLH), 212–215 (DIPG), 279–282 (NKID), and 308–310 (SGV). Mg(2+)-binding residues include serine 173 and threonine 193.

Belongs to the TRAFAC class OBG-HflX-like GTPase superfamily. OBG GTPase family. Monomer. Requires Mg(2+) as cofactor.

Its subcellular location is the cytoplasm. An essential GTPase which binds GTP, GDP and possibly (p)ppGpp with moderate affinity, with high nucleotide exchange rates and a fairly low GTP hydrolysis rate. Plays a role in control of the cell cycle, stress response, ribosome biogenesis and in those bacteria that undergo differentiation, in morphogenesis control. This is GTPase Obg from Rhodopseudomonas palustris (strain BisB5).